The chain runs to 218 residues: Eukaryotic translation initiation factor 3 subunit K (218 aa).

Ala-2 carries the post-translational modification N-acetylalanine. A Phosphothreonine modification is found at Thr-28. One can recognise a PCI domain in the interval 42-204 (YDLEANLAVL…SIKPKNIVEK (163 aa)). At Ser-217 the chain carries Phosphoserine.

Belongs to the eIF-3 subunit K family. Component of the eukaryotic translation initiation factor 3 (eIF-3) complex, which is composed of 13 subunits: EIF3A, EIF3B, EIF3C, EIF3D, EIF3E, EIF3F, EIF3G, EIF3H, EIF3I, EIF3J, EIF3K, EIF3L and EIF3M. The eIF-3 complex appears to include 3 stable modules: module A is composed of EIF3A, EIF3B, EIF3G and EIF3I; module B is composed of EIF3F, EIF3H, and EIF3M; and module C is composed of EIF3C, EIF3D, EIF3E, EIF3K and EIF3L. EIF3C of module C binds EIF3B of module A and EIF3H of module B, thereby linking the three modules. EIF3J is a labile subunit that binds to the eIF-3 complex via EIF3B. The eIF-3 complex interacts with RPS6KB1 under conditions of nutrient depletion. Mitogenic stimulation leads to binding and activation of a complex composed of MTOR and RPTOR, leading to phosphorylation and release of RPS6KB1 and binding of EIF4B to eIF-3. Interacts with CCND3, but not with CCND1 and CCND2.

The protein resides in the nucleus. It is found in the cytoplasm. In terms of biological role, component of the eukaryotic translation initiation factor 3 (eIF-3) complex, which is required for several steps in the initiation of protein synthesis. The eIF-3 complex associates with the 40S ribosome and facilitates the recruitment of eIF-1, eIF-1A, eIF-2:GTP:methionyl-tRNAi and eIF-5 to form the 43S pre-initiation complex (43S PIC). The eIF-3 complex stimulates mRNA recruitment to the 43S PIC and scanning of the mRNA for AUG recognition. The eIF-3 complex is also required for disassembly and recycling of post-termination ribosomal complexes and subsequently prevents premature joining of the 40S and 60S ribosomal subunits prior to initiation. The eIF-3 complex specifically targets and initiates translation of a subset of mRNAs involved in cell proliferation, including cell cycling, differentiation and apoptosis, and uses different modes of RNA stem-loop binding to exert either translational activation or repression. This is Eukaryotic translation initiation factor 3 subunit K from Bos taurus (Bovine).